A 284-amino-acid polypeptide reads, in one-letter code: Ribosomal RNA small subunit methyltransferase A (284 aa).

6 residues coordinate S-adenosyl-L-methionine: Asn-27, Leu-29, Gly-54, Glu-75, Asp-100, and Asn-125.

Belongs to the class I-like SAM-binding methyltransferase superfamily. rRNA adenine N(6)-methyltransferase family. RsmA subfamily.

It is found in the cytoplasm. It carries out the reaction adenosine(1518)/adenosine(1519) in 16S rRNA + 4 S-adenosyl-L-methionine = N(6)-dimethyladenosine(1518)/N(6)-dimethyladenosine(1519) in 16S rRNA + 4 S-adenosyl-L-homocysteine + 4 H(+). Its function is as follows. Specifically dimethylates two adjacent adenosines (A1518 and A1519) in the loop of a conserved hairpin near the 3'-end of 16S rRNA in the 30S particle. May play a critical role in biogenesis of 30S subunits. The sequence is that of Ribosomal RNA small subunit methyltransferase A from Protochlamydia amoebophila (strain UWE25).